A 204-amino-acid polypeptide reads, in one-letter code: Ribosomal RNA small subunit methyltransferase G (204 aa).

S-adenosyl-L-methionine contacts are provided by Gly-73, Phe-78, and Arg-139.

This sequence belongs to the methyltransferase superfamily. RNA methyltransferase RsmG family.

The protein resides in the cytoplasm. It carries out the reaction guanosine(527) in 16S rRNA + S-adenosyl-L-methionine = N(7)-methylguanosine(527) in 16S rRNA + S-adenosyl-L-homocysteine. Its function is as follows. Specifically methylates the N7 position of guanine in position 527 of 16S rRNA. This Coxiella burnetii (strain Dugway 5J108-111) protein is Ribosomal RNA small subunit methyltransferase G.